Here is a 352-residue protein sequence, read N- to C-terminus: MEERNISGRDLRVDSNITYWGTNITAVNESNHTGMSFCEVVSCTMVFLSLIVALVGLVGNATVLWFLGFQMRRNAFSVYILNLAGADFLFICFQIGYCFHMILDIDSIPIEIDLFYLVVLNFPYFCGLSILSAISIERCLSVMWPIWYHCQRPRHTSAVICTLLWVLSLVCSLLEGKECGFLYYTSDPGWCKTFDLITATWLIVLFVALLGSSLALVITIFWGLHKIPVTRLYVAIVFTVLVFLLFGLPYGIYWFLLVWIEKFYYVLPCSIYPVTVFLSCVNSSAKPIIYCLVGSIRHHRFQRKTLKLFLQRAMQDTPEEEECGEMGSSGRSREIKTIWKGLRAALIRHKEL.

Residues 1–45 (MEERNISGRDLRVDSNITYWGTNITAVNESNHTGMSFCEVVSCTM) are Extracellular-facing. Asparagine 5, asparagine 16, asparagine 23, asparagine 28, and asparagine 31 each carry an N-linked (GlcNAc...) asparagine glycan. A helical transmembrane segment spans residues 46–66 (VFLSLIVALVGLVGNATVLWF). The Cytoplasmic segment spans residues 67 to 75 (LGFQMRRNA). The chain crosses the membrane as a helical span at residues 76-96 (FSVYILNLAGADFLFICFQIG). Residues 97–107 (YCFHMILDIDS) lie on the Extracellular side of the membrane. A helical transmembrane segment spans residues 108-128 (IPIEIDLFYLVVLNFPYFCGL). The Cytoplasmic portion of the chain corresponds to 129–155 (SILSAISIERCLSVMWPIWYHCQRPRH). The chain crosses the membrane as a helical span at residues 156-176 (TSAVICTLLWVLSLVCSLLEG). Residues 177–195 (KECGFLYYTSDPGWCKTFD) lie on the Extracellular side of the membrane. A helical transmembrane segment spans residues 196–216 (LITATWLIVLFVALLGSSLAL). Residues 217–239 (VITIFWGLHKIPVTRLYVAIVFT) are Cytoplasmic-facing. The helical transmembrane segment at 240–260 (VLVFLLFGLPYGIYWFLLVWI) threads the bilayer. Residues 261–275 (EKFYYVLPCSIYPVT) lie on the Extracellular side of the membrane. Residues 276-296 (VFLSCVNSSAKPIIYCLVGSI) form a helical membrane-spanning segment. Topologically, residues 297–347 (RHHRFQRKTLKLFLQRAMQDTPEEEECGEMGSSGRSREIKTIWKGLRAALI) are cytoplasmic.

It belongs to the G-protein coupled receptor 1 family. Mas subfamily.

It is found in the cell membrane. Functionally, orphan receptor. Probably involved in the function of nociceptive neurons. May regulate nociceptor function and/or development, including the sensation or modulation of pain. This Mus musculus (Mouse) protein is Mas-related G-protein coupled receptor member X2 (Mrgprx2).